Reading from the N-terminus, the 278-residue chain is Expansin-B17 (278 aa).

A signal peptide spans 1-26 (MAAASSRSFSLCVLLLLLLLAPPISA). The region spanning 66 to 176 (GGACGYGSLV…RRTACKYGGK (111 aa)) is the Expansin-like EG45 domain. Cystine bridges form between Cys-69–Cys-98, Cys-101–Cys-171, and Cys-106–Cys-112. The region spanning 189–270 (FWLSLLVEFE…NWKPTATYTS (82 aa)) is the Expansin-like CBD domain.

The protein belongs to the expansin family. Expansin B subfamily.

The protein localises to the secreted. The protein resides in the cell wall. It localises to the membrane. In terms of biological role, may cause loosening and extension of plant cell walls by disrupting non-covalent bonding between cellulose microfibrils and matrix glucans. No enzymatic activity has been found. May be required for rapid internodal elongation in deepwater rice during submergence. In Oryza sativa subsp. japonica (Rice), this protein is Expansin-B17 (EXPB17).